A 404-amino-acid polypeptide reads, in one-letter code: Glucose-1-phosphate adenylyltransferase (404 aa).

Alpha-D-glucose 1-phosphate is bound by residues Tyr99, Gly164, 179–180 (EK), and Ser197.

It belongs to the bacterial/plant glucose-1-phosphate adenylyltransferase family. In terms of assembly, homotetramer.

It carries out the reaction alpha-D-glucose 1-phosphate + ATP + H(+) = ADP-alpha-D-glucose + diphosphate. Its pathway is glycan biosynthesis; glycogen biosynthesis. Involved in the biosynthesis of ADP-glucose, a building block required for the elongation reactions to produce glycogen. Catalyzes the reaction between ATP and alpha-D-glucose 1-phosphate (G1P) to produce pyrophosphate and ADP-Glc. The polypeptide is Glucose-1-phosphate adenylyltransferase (Rhodococcus opacus (strain B4)).